The chain runs to 249 residues: Molybdate/tungstate transport system permease protein WtpB (249 aa).

The Cytoplasmic portion of the chain corresponds to Met1–Asp5. Residues Ile6 to Met26 traverse the membrane as a helical segment. At Leu27–Thr48 the chain is on the extracellular side. In terms of domain architecture, ABC transmembrane type-1 spans Phe45–Leu240. Residues Leu49–Ile69 traverse the membrane as a helical segment. The Cytoplasmic portion of the chain corresponds to Leu70–His93. The helical transmembrane segment at Ser94 to Gly114 threads the bilayer. Topologically, residues Arg115–Tyr116 are extracellular. Residues Val117 to Val137 form a helical membrane-spanning segment. Residues Asn138–Asn177 lie on the Cytoplasmic side of the membrane. A helical membrane pass occupies residues Ile178–Ile198. Residues Ile199–Lys223 lie on the Extracellular side of the membrane. Residues Pro224 to Gly244 form a helical membrane-spanning segment. Residues Arg245 to Arg249 are Cytoplasmic-facing.

Belongs to the binding-protein-dependent transport system permease family. As to quaternary structure, the complex is composed of two ATP-binding proteins (WtpC), two transmembrane proteins (WtpB) and a solute-binding protein (WtpA).

The protein localises to the cell membrane. In terms of biological role, part of the ABC transporter complex WtpABC involved in molybdate/tungstate import. Probably responsible for the translocation of the substrate across the membrane. The chain is Molybdate/tungstate transport system permease protein WtpB (wtpB) from Methanocaldococcus jannaschii (strain ATCC 43067 / DSM 2661 / JAL-1 / JCM 10045 / NBRC 100440) (Methanococcus jannaschii).